The sequence spans 623 residues: DNA polymerase alpha subunit B (623 aa).

Residues 113–151 (IPKIKDEPSSSVDVSTARNKNNHNNNNNNNPSLPNKSMF) are disordered. Residues 121–130 (SSSVDVSTAR) are compositionally biased toward polar residues.

Belongs to the DNA polymerase alpha subunit B family. As to quaternary structure, DNA polymerase alpha:primase is a four subunit enzyme complex, which is assembled throughout the cell cycle, and consists of the two DNA polymerase subunits A and B, and the DNA primase large and small subunits. Subunit B binds to subunit A.

It localises to the nucleus. Its function is as follows. May play an essential role at the early stage of chromosomal DNA replication by coupling the polymerase alpha/primase complex to the cellular replication machinery. The polypeptide is DNA polymerase alpha subunit B (polA2) (Dictyostelium discoideum (Social amoeba)).